We begin with the raw amino-acid sequence, 311 residues long: Glycine--tRNA ligase alpha subunit (311 aa).

The protein belongs to the class-II aminoacyl-tRNA synthetase family. Tetramer of two alpha and two beta subunits.

It localises to the cytoplasm. It carries out the reaction tRNA(Gly) + glycine + ATP = glycyl-tRNA(Gly) + AMP + diphosphate. This Brucella anthropi (strain ATCC 49188 / DSM 6882 / CCUG 24695 / JCM 21032 / LMG 3331 / NBRC 15819 / NCTC 12168 / Alc 37) (Ochrobactrum anthropi) protein is Glycine--tRNA ligase alpha subunit.